The sequence spans 201 residues: IDLSRF-like peptide (201 aa).

The signal sequence occupies residues 1 to 28; sequence MVRRFCNGAVALGIALTACAAFPRAIMA. The propeptide occupies 43–201; that stretch reads SDACHPYEPF…EKLVKTGFLD (159 aa). Positions 45 to 85 constitute an LDL-receptor class A domain; that stretch reads ACHPYEPFKCPGDGLCISIQYLCDGAPDCQDGYDEDSRLCT. Cystine bridges form between Cys-46-Cys-60, Cys-54-Cys-73, and Cys-67-Cys-84.

In terms of tissue distribution, expressed in central brain, antennal and optical lobes, in gnathal, thoracic and abdominal ganglia and in the retrocerebral complex (at protein level).

It is found in the secreted. The sequence is that of IDLSRF-like peptide from Camponotus floridanus (Florida carpenter ant).